A 444-amino-acid polypeptide reads, in one-letter code: MTLSETHPTARSEALFVRARAVTPGGVNSPVRAFRSVGGVPRFIASAQGAYLTDADGARYLDYIGSWGPMILGHNHPAVRDAVAQALASGTSFGAPNEREVELAELIVELTGAERVRFVSSGTEATMSALRLARGYTGRKFIVKFRGNYHGHADGLLVEAGSGLLTNAEGDLGAAAPSSAGVPEEYAGLTLVLDYNDPEALDALMAQRGDEIAAVIFEPVVGNAGVLIPTSDFLAALHRVRDFGAVLIADEVMTGFRLSLNGATGLLSLDPDLRCWGKIVGGGLPVGAYGGRADIMDFVSPQGPVYQAGTLSGNPLAMAAGIATLRELKANPGLYRQLDEYAARLAAGLRGAAERAGVAVSINHIGSMLTVFFQDAPDGSVRDYAAAARSDTAAFAAWFQGLLARGIYWAPSQFESIFISAAHGEPELAATLEAAAQAFEGVKP.

Lys278 bears the N6-(pyridoxal phosphate)lysine mark.

Belongs to the class-III pyridoxal-phosphate-dependent aminotransferase family. HemL subfamily. As to quaternary structure, homodimer. Pyridoxal 5'-phosphate is required as a cofactor.

It is found in the cytoplasm. It catalyses the reaction (S)-4-amino-5-oxopentanoate = 5-aminolevulinate. It functions in the pathway porphyrin-containing compound metabolism; protoporphyrin-IX biosynthesis; 5-aminolevulinate from L-glutamyl-tRNA(Glu): step 2/2. This chain is Glutamate-1-semialdehyde 2,1-aminomutase, found in Deinococcus radiodurans (strain ATCC 13939 / DSM 20539 / JCM 16871 / CCUG 27074 / LMG 4051 / NBRC 15346 / NCIMB 9279 / VKM B-1422 / R1).